We begin with the raw amino-acid sequence, 411 residues long: Serine--tRNA ligase (411 aa).

Residue 226–228 coordinates L-serine; it reads TSE. Position 257-259 (257-259) interacts with ATP; the sequence is RKE. Glutamate 280 serves as a coordination point for L-serine. Residue 344–347 participates in ATP binding; the sequence is EISS. Serine 379 is a binding site for L-serine.

The protein belongs to the class-II aminoacyl-tRNA synthetase family. Type-1 seryl-tRNA synthetase subfamily. As to quaternary structure, homodimer. The tRNA molecule binds across the dimer.

Its subcellular location is the cytoplasm. It catalyses the reaction tRNA(Ser) + L-serine + ATP = L-seryl-tRNA(Ser) + AMP + diphosphate + H(+). It carries out the reaction tRNA(Sec) + L-serine + ATP = L-seryl-tRNA(Sec) + AMP + diphosphate + H(+). It functions in the pathway aminoacyl-tRNA biosynthesis; selenocysteinyl-tRNA(Sec) biosynthesis; L-seryl-tRNA(Sec) from L-serine and tRNA(Sec): step 1/1. Its function is as follows. Catalyzes the attachment of serine to tRNA(Ser). Is also able to aminoacylate tRNA(Sec) with serine, to form the misacylated tRNA L-seryl-tRNA(Sec), which will be further converted into selenocysteinyl-tRNA(Sec). In Campylobacter jejuni subsp. doylei (strain ATCC BAA-1458 / RM4099 / 269.97), this protein is Serine--tRNA ligase.